The sequence spans 396 residues: Ribosomal RNA large subunit methyltransferase I (396 aa).

The region spanning 2–79 is the PUA domain; it reads AIRIKLKPGR…REEEIDREFF (78 aa).

It belongs to the methyltransferase superfamily. RlmI family.

Its subcellular location is the cytoplasm. It carries out the reaction cytidine(1962) in 23S rRNA + S-adenosyl-L-methionine = 5-methylcytidine(1962) in 23S rRNA + S-adenosyl-L-homocysteine + H(+). Its function is as follows. Specifically methylates the cytosine at position 1962 (m5C1962) of 23S rRNA. The protein is Ribosomal RNA large subunit methyltransferase I of Shewanella oneidensis (strain ATCC 700550 / JCM 31522 / CIP 106686 / LMG 19005 / NCIMB 14063 / MR-1).